The chain runs to 229 residues: Zinc finger matrin-type protein 4 (229 aa).

4 consecutive Matrin-type zinc fingers follow at residues 14–44 (SYCK…KVRL), 72–106 (DKNK…LKLL), 145–175 (RYCG…NAAR), and 198–228 (YRCT…NLKN).

It is found in the nucleus. This chain is Zinc finger matrin-type protein 4 (Zmat4), found in Mus musculus (Mouse).